The following is a 151-amino-acid chain: Deoxyuridine 5'-triphosphate nucleotidohydrolase (151 aa).

Substrate is bound by residues 70 to 72 (RSG), Asn83, 87 to 89 (LID), and Met97.

This sequence belongs to the dUTPase family. Mg(2+) is required as a cofactor.

It carries out the reaction dUTP + H2O = dUMP + diphosphate + H(+). Its pathway is pyrimidine metabolism; dUMP biosynthesis; dUMP from dCTP (dUTP route): step 2/2. Functionally, this enzyme is involved in nucleotide metabolism: it produces dUMP, the immediate precursor of thymidine nucleotides and it decreases the intracellular concentration of dUTP so that uracil cannot be incorporated into DNA. The sequence is that of Deoxyuridine 5'-triphosphate nucleotidohydrolase from Pseudomonas syringae pv. tomato (strain ATCC BAA-871 / DC3000).